Reading from the N-terminus, the 234-residue chain is Ribosome-inactivating protein lychnin (234 aa).

C32 and C115 are disulfide-bonded. The active site involves E170.

In terms of assembly, monomer.

It catalyses the reaction Endohydrolysis of the N-glycosidic bond at one specific adenosine on the 28S rRNA.. Ribosome-inactivating protein of type 1, inhibits protein synthesis in animal cells. Inhibits cell-free translation in rabbit reticulocyte lysate system with an IC(50) of 0.17 nM. In Silene chalcedonica (Maltese-cross), this protein is Ribosome-inactivating protein lychnin.